Here is a 94-residue protein sequence, read N- to C-terminus: Acylphosphatase (94 aa).

Residues 8–94 form the Acylphosphatase-like domain; sequence RLTAWVHGRV…REQITGFHER (87 aa). Active-site residues include Arg23 and Asn41.

It belongs to the acylphosphatase family.

The catalysed reaction is an acyl phosphate + H2O = a carboxylate + phosphate + H(+). In Mycobacterium sp. (strain JLS), this protein is Acylphosphatase (acyP).